The chain runs to 59 residues: Large ribosomal subunit protein uL30 (59 aa).

It belongs to the universal ribosomal protein uL30 family. As to quaternary structure, part of the 50S ribosomal subunit.

This chain is Large ribosomal subunit protein uL30, found in Aliivibrio fischeri (strain MJ11) (Vibrio fischeri).